Here is a 572-residue protein sequence, read N- to C-terminus: MRTSQYLLSTLKETPADAEVISHQLMLRAGMIRKLASGLYTWLPTGVRVLKKVENIVREEMNNAGAIEVLMPVVQPSELWQESGRWEQYGPELLRIADRGDRPFVLGPTHEEVITDLIRNELNSYKQLPLNFYQIQTKFRDEVRPRFGVMRSREFLMKDAYSFHTSQESLQETYDAMYAAYSKIFSRMGLDFRAVQADTGSIGGSASHEFQVLAQSGEDDVIFSDSSDYAANIEFAEAVAPKEPRAAATQEMTLVDTPNAKTIAELVEQFNLPIEKTVKTLLVKAVEDSASPLVALLVRGDHELNEVKAEKLPQVASPLTFATEEEIRALVNAGPGSLGPVNMPVPVIIDRTVAVMSDFAAGANIDGKHYFGINWDRDVATPEVADIRNVVAGDPSPDGKGTLLIKRGIEVGHIFQLGTKYSEAMKAAVQGEDGRNQILTMGCYGIGVTRVVAAAIEQNFDDRGIVWPDAIAPFQVAILPMNMHKSYRVQELAEKLYAELSAQGIEVLMDDRKERPGVMFADMELIGIPHTIVLGDRNLDNDDIEYKYRRNGEKQLIKTGDIVEYLVKAIKG.

Belongs to the class-II aminoacyl-tRNA synthetase family. ProS type 1 subfamily. As to quaternary structure, homodimer.

Its subcellular location is the cytoplasm. The catalysed reaction is tRNA(Pro) + L-proline + ATP = L-prolyl-tRNA(Pro) + AMP + diphosphate. In terms of biological role, catalyzes the attachment of proline to tRNA(Pro) in a two-step reaction: proline is first activated by ATP to form Pro-AMP and then transferred to the acceptor end of tRNA(Pro). As ProRS can inadvertently accommodate and process non-cognate amino acids such as alanine and cysteine, to avoid such errors it has two additional distinct editing activities against alanine. One activity is designated as 'pretransfer' editing and involves the tRNA(Pro)-independent hydrolysis of activated Ala-AMP. The other activity is designated 'posttransfer' editing and involves deacylation of mischarged Ala-tRNA(Pro). The misacylated Cys-tRNA(Pro) is not edited by ProRS. The polypeptide is Proline--tRNA ligase (Klebsiella pneumoniae subsp. pneumoniae (strain ATCC 700721 / MGH 78578)).